Consider the following 611-residue polypeptide: Chloroplast sensor kinase, chloroplastic (611 aa).

The transit peptide at 1 to 79 (MLLSAIASQT…PGGGETMVAS (79 aa)) directs the protein to the chloroplast. Positions 17–50 (NLHFSNSIPNPRPSNPSLKLLNASSSSSSSSSSS) are disordered. Residues 40 to 50 (SSSSSSSSSSS) show a composition bias toward low complexity. Residues 116 to 300 (DFQRLCLEQL…VMDQKTMLLQ (185 aa)) are GAF. [3Fe-4S] cluster is bound at residue C121. Residue S188 is modified to Phosphoserine. Positions 312–602 (KLVEQIRGPL…RVELWLPAFP (291 aa)) constitute a Histidine kinase domain. Residues 345–380 (VEDLIVQGDQIKDTLEELQDAVHLTKANIVRHNEEA) are a coiled coil. The segment covering 385–402 (NKTHNETRRSKYEHKDPI) has biased composition (basic and acidic residues). The tract at residues 385 to 420 (NKTHNETRRSKYEHKDPIDGSQISSTRLSLGSGLDD) is disordered.

The protein belongs to the chloroplast sensor kinase protein family. Self-interacts. Interacts with the plastoquinone analog 2,5-dibromo-3-methyl-5-isopropyl-p-benzoquinone (DBMIB) and with SIGA/SIG1. [3Fe-4S] cluster serves as cofactor. Autophosphorylated, possibly on tyrosine residues, in photosystem I (PS I) light and in the presence of manganese ions Mn(2+), to a lesser degree, in the presence of calcium ions Ca(2+), but not in the presence of magnesium ions Mg(2+). Dithiothreitol (DTT) stimulates autophosphorylation. Phosphorylated on Ser-188 in vivo after exposure to far-red light (when plastoquinone (PQ) is oxidized). Not phosphorylated under orange light (reduces PQ).

It is found in the plastid. It localises to the chloroplast stroma. The enzyme catalyses L-tyrosyl-[protein] + ATP = O-phospho-L-tyrosyl-[protein] + ADP + H(+). Its function is as follows. Sensor kinase that senses the plastoquinone (PQ) redox state involved in stoichiometry adjustment of both photosystems (e.g. long-term adaptation via transcriptional regulation of reaction center genes of photosystems I and II) and state transitions (e.g. short-term adaptation involving reversible post-translational phosphorylation of light-harvesting complex II, LHC II), thus linking photosynthesis with gene expression in chloroplasts. Autophosphorylates, probably on a tyrosine residue. Probably phosphorylates SIGA/SIG1 in response to plastoquinone redox state modification. Reduced PQ suppresses its autophosphorylation activity. Represses expression of a number of chloroplast-encoded genes. The sequence is that of Chloroplast sensor kinase, chloroplastic from Arabidopsis thaliana (Mouse-ear cress).